The primary structure comprises 375 residues: Membrane progesterone receptor epsilon (375 aa).

Positions Met1–Thr39 are disordered. Residues Met1 to Asn84 lie on the Cytoplasmic side of the membrane. Low complexity predominate over residues Pro15 to Thr39. The helical transmembrane segment at Phe85–Leu105 threads the bilayer. At Gly106–His114 the chain is on the extracellular side. Residues Pro115–Cys135 traverse the membrane as a helical segment. Residues Thr136 to Ser160 lie on the Cytoplasmic side of the membrane. Residues Tyr161 to Leu181 traverse the membrane as a helical segment. Residues Asp182 to Leu203 lie on the Extracellular side of the membrane. A helical membrane pass occupies residues Ile204–Val224. Over Ala225–Arg241 the chain is Cytoplasmic. The chain crosses the membrane as a helical span at residues Thr242–Phe262. At Asp263–Pro299 the chain is on the extracellular side. A helical transmembrane segment spans residues Gly300–Ile320. Over Tyr321–Ala341 the chain is Cytoplasmic. The helical transmembrane segment at Pro342–Ile362 threads the bilayer. Topologically, residues Arg363 to Lys375 are extracellular.

Belongs to the ADIPOR family. As to quaternary structure, homodimer.

The protein resides in the cell membrane. Functionally, plasma membrane progesterone (P4) receptor coupled to G proteins. Seems to act through a G(s) mediated pathway. May be involved in regulating rapid P4 signaling in the nervous system. Also binds dehydroepiandrosterone (DHEA), pregnanolone, pregnenolone and allopregnanolone. This chain is Membrane progesterone receptor epsilon, found in Mus musculus (Mouse).